A 241-amino-acid polypeptide reads, in one-letter code: Phosphoribosylaminoimidazole-succinocarboxamide synthase (241 aa).

Belongs to the SAICAR synthetase family.

The enzyme catalyses 5-amino-1-(5-phospho-D-ribosyl)imidazole-4-carboxylate + L-aspartate + ATP = (2S)-2-[5-amino-1-(5-phospho-beta-D-ribosyl)imidazole-4-carboxamido]succinate + ADP + phosphate + 2 H(+). It functions in the pathway purine metabolism; IMP biosynthesis via de novo pathway; 5-amino-1-(5-phospho-D-ribosyl)imidazole-4-carboxamide from 5-amino-1-(5-phospho-D-ribosyl)imidazole-4-carboxylate: step 1/2. This chain is Phosphoribosylaminoimidazole-succinocarboxamide synthase, found in Latilactobacillus sakei subsp. sakei (strain 23K) (Lactobacillus sakei subsp. sakei).